Reading from the N-terminus, the 187-residue chain is Elongation factor P (187 aa).

The protein belongs to the elongation factor P family.

The protein localises to the cytoplasm. It functions in the pathway protein biosynthesis; polypeptide chain elongation. Its function is as follows. Involved in peptide bond synthesis. Stimulates efficient translation and peptide-bond synthesis on native or reconstituted 70S ribosomes in vitro. Probably functions indirectly by altering the affinity of the ribosome for aminoacyl-tRNA, thus increasing their reactivity as acceptors for peptidyl transferase. The chain is Elongation factor P from Mycoplasmopsis pulmonis (strain UAB CTIP) (Mycoplasma pulmonis).